A 437-amino-acid polypeptide reads, in one-letter code: MNIAVVGLSHRTAPVEVREKLSISDEHIEKSFCSLNATEQVLEVSILSTCNRLEIYALVKNQELGVSAIKEFLIDHSGLSKEDLFPHLFTFNQAEAVNHLMRVSGGLDSLVLGEGQILSQVKKMVRLGQDYKSIGPILNRLLTQAVSTGKKVRSDTNLGTGAVSISSAAVELAQLKLGQSLGKDQLMTLQSEKVAVIGAGRMSRLLIQHLQSKGCSKLTLLNRTLNRAESLAKDFPDLDVKCGLLDDLDKCIEFSTLIFTSTASNTPIINSELLSGFKRNNNLLRLIDIGVPRNIASDVSGLPGFEAYDVDDLQEVVARNQDARQQIAIEAQNLIDEEARVFLEWWASLEAVPTINRLRSNLESIRKEELQKALSRMGPDFSARERKVVEALSKGIINKILHTPVTNLRAPQPSSQRKESLKIVESLFELGVSENDQ.

Substrate is bound by residues 49–52 (TCNR), serine 109, 114–116 (EGQ), and glutamine 120. Cysteine 50 functions as the Nucleophile in the catalytic mechanism. 198 to 203 (GAGRMS) is a binding site for NADP(+).

This sequence belongs to the glutamyl-tRNA reductase family. As to quaternary structure, homodimer.

The catalysed reaction is (S)-4-amino-5-oxopentanoate + tRNA(Glu) + NADP(+) = L-glutamyl-tRNA(Glu) + NADPH + H(+). The protein operates within porphyrin-containing compound metabolism; protoporphyrin-IX biosynthesis; 5-aminolevulinate from L-glutamyl-tRNA(Glu): step 1/2. It participates in porphyrin-containing compound metabolism; chlorophyll biosynthesis. Functionally, catalyzes the NADPH-dependent reduction of glutamyl-tRNA(Glu) to glutamate 1-semialdehyde (GSA). The protein is Glutamyl-tRNA reductase of Prochlorococcus marinus (strain SARG / CCMP1375 / SS120).